Consider the following 213-residue polypeptide: High frequency lysogenization protein HflD (213 aa).

The stretch at 79–126 (QGLNAELTRYTLSLMVLERKLSSAKGALDTLGNRINGLQRQLEHFDLQ) forms a coiled coil.

Belongs to the HflD family. In terms of assembly, interacts with CII protein from phage lambda.

The protein resides in the cytoplasm. It is found in the cell inner membrane. In terms of biological role, negative regulator of phage lambda lysogenization. Contributes to the degradation of the phage regulatory protein CII. Acts probably by holding CII on the membrane surface, away from the target promoters, but close to the FtsH protease. The chain is High frequency lysogenization protein HflD from Escherichia coli O127:H6 (strain E2348/69 / EPEC).